A 102-amino-acid chain; its full sequence is Large ribosomal subunit protein uL24 (102 aa).

This sequence belongs to the universal ribosomal protein uL24 family. In terms of assembly, part of the 50S ribosomal subunit.

In terms of biological role, one of two assembly initiator proteins, it binds directly to the 5'-end of the 23S rRNA, where it nucleates assembly of the 50S subunit. Its function is as follows. One of the proteins that surrounds the polypeptide exit tunnel on the outside of the subunit. This is Large ribosomal subunit protein uL24 from Macrococcus caseolyticus (strain JCSC5402) (Macrococcoides caseolyticum).